Consider the following 467-residue polypeptide: ATP-dependent protease ATPase subunit HslU (467 aa).

Residues Val-22 and 64-69 (GVGKTE) contribute to the ATP site. The tract at residues 166–185 (GQNQDEEEEPPTEEIKTKRS) is disordered. Asp-280, Glu-345, and Arg-417 together coordinate ATP.

Belongs to the ClpX chaperone family. HslU subfamily. As to quaternary structure, a double ring-shaped homohexamer of HslV is capped on each side by a ring-shaped HslU homohexamer. The assembly of the HslU/HslV complex is dependent on binding of ATP.

Its subcellular location is the cytoplasm. Its function is as follows. ATPase subunit of a proteasome-like degradation complex; this subunit has chaperone activity. The binding of ATP and its subsequent hydrolysis by HslU are essential for unfolding of protein substrates subsequently hydrolyzed by HslV. HslU recognizes the N-terminal part of its protein substrates and unfolds these before they are guided to HslV for hydrolysis. This Staphylococcus epidermidis (strain ATCC 35984 / DSM 28319 / BCRC 17069 / CCUG 31568 / BM 3577 / RP62A) protein is ATP-dependent protease ATPase subunit HslU.